The primary structure comprises 134 residues: Seminal plasma protein PDC-109 (134 aa).

Positions 1-25 (MALQLGLFLIWAGVSVFLQLDPVNG) are cleaved as a signal peptide. An O-linked (GalNAc...) threonine glycan is attached at threonine 36. 2 consecutive Fibronectin type-II domains span residues 44-88 (PEDE…YCAQ) and 89-134 (RDYA…WKYC). Intrachain disulfides connect cysteine 49-cysteine 73, cysteine 63-cysteine 86, cysteine 94-cysteine 119, and cysteine 108-cysteine 134.

This sequence belongs to the seminal plasma protein family. In terms of assembly, homodimer. O-linked glycan consists of Gal-GalNAc disaccharide which is modified with a sialic acid residue (macro- and/or microheterogeneity account for differences between BSP-A1 and BSP-A2). As to expression, major component of seminal plasma.

It localises to the secreted. In terms of biological role, could enhance the fertilizing capacity of bull spermatozoa upon interaction with heparin-like glycosaminoglycans present in the female genital tract. Exhibits both simulatory and inhibitory actions on the release of pituitary gonadotropins. This Bos taurus (Bovine) protein is Seminal plasma protein PDC-109.